We begin with the raw amino-acid sequence, 83 residues long: Defensin-like protein 194 (83 aa).

The signal sequence occupies residues 1-27 (MAMKSVSNFAIFLILFLVTSEISEIEA). 4 cysteine pairs are disulfide-bonded: C32/C78, C44/C68, C53/C73, and C57/C75.

This sequence belongs to the DEFL family. Protease inhibitor I18 (RTI/MTI-2) subfamily.

The protein resides in the secreted. The sequence is that of Defensin-like protein 194 (ATTI3) from Arabidopsis thaliana (Mouse-ear cress).